The chain runs to 1312 residues: Cyclic GMP-binding protein D (1312 aa).

The region spanning 26-155 (GFSAIKSCSL…EFFKAKKMAR (130 aa)) is the N-terminal Ras-GEF domain. Composition is skewed to low complexity over residues 206–236 (NTMNGINGTSNNNVNSNNNNNNGTTNISSPN) and 275–296 (NGTSPQSSPSSTLSSTNSLFNQ). 2 disordered regions span residues 206–244 (NTMNGINGTSNNNVNSNNNNNNGTTNISSPNFDPSRSSM) and 260–326 (NFNN…NNVN). A compositionally biased stretch (polar residues) spans 297 to 310 (QPSLSMLNDDGSVQ). The span at 311–326 (NNNNNNNNNNNNNNVN) shows a compositional bias: low complexity. A Ras-GEF domain is found at 353-582 (LPEAIAKELT…FRLSKIREET (230 aa)). Positions 586–658 (QSLKESNGIG…NCGNGSGISS (73 aa)) are disordered. Residues 591-612 (SNGIGNSNSTSGGSSSSLVNKD) show a composition bias toward low complexity. Residues 613 to 625 (GSGGGGGSGGGGS) show a composition bias toward gly residues. Basic and acidic residues predominate over residues 630-644 (GDGKGDGKDNRDGRG). A compositionally biased stretch (low complexity) spans 646 to 657 (GNSNCGNGSGIS). A nucleoside 3',5'-cyclic phosphate is bound at residue 698–857 (VSSTLSEREW…ATFYKFIGVI (160 aa)). One can recognise a GRAM domain in the interval 940–1006 (SSFRTKFGLS…DKILTVDKNI (67 aa)). The segment covering 1059 to 1087 (QQQQPSQQPSQQQSQSSQLQQSVSASSTT) has biased composition (low complexity). 2 disordered regions span residues 1059 to 1108 (QQQQ…IKDL) and 1167 to 1210 (NNIN…NSSI). A nucleoside 3',5'-cyclic phosphate is bound by residues 1105-1218 (IKDL…SNTS) and 1182-1303 (NNNN…LACV).

Promotes the exchange of Ras-bound GDP by GTP. Induces the formation of substrate-attached pseudopodia, that leads to increased adhesion and thereby negatively influencing cell speed and polarity. The protein is Cyclic GMP-binding protein D (gbpD) of Dictyostelium discoideum (Social amoeba).